A 270-amino-acid polypeptide reads, in one-letter code: MTSGAPDLLIDAGNSRIKWALVTADGSQIAAGALPHSGADQPDWSDLPTPCRAWLSNVAGENVAARIAASLDARWPQLPLTTIRACAQQCGVTNSYTTPQALGSDRWAGMIGAHAAFLGEHLLIATFGTATTLEALRADGCFVGGLIAPGWSLMMRSLGEHTAQLPTLDAHAARGLLDGSIAAAGRSGPFFATDTPRSLSAGCTLAQAGLVERMWRDLQDEWQVPVRLVVSGGAVDEVASALKVPHTRHDSLVLSGLALIAAERALERGN.

Residue 11-18 (DAGNSRIK) participates in ATP binding. Substrate-binding positions include Tyr96 and 103-106 (GSDR). The active-site Proton acceptor is Asp105. Thr129 is a binding site for ATP. Position 195 (Thr195) interacts with substrate.

Belongs to the type III pantothenate kinase family. Homodimer. The cofactor is NH4(+). It depends on K(+) as a cofactor.

It is found in the cytoplasm. It carries out the reaction (R)-pantothenate + ATP = (R)-4'-phosphopantothenate + ADP + H(+). Its pathway is cofactor biosynthesis; coenzyme A biosynthesis; CoA from (R)-pantothenate: step 1/5. Its function is as follows. Catalyzes the phosphorylation of pantothenate (Pan), the first step in CoA biosynthesis. This Paraburkholderia phytofirmans (strain DSM 17436 / LMG 22146 / PsJN) (Burkholderia phytofirmans) protein is Type III pantothenate kinase.